Consider the following 450-residue polypeptide: Eukaryotic translation initiation factor 3 subunit E (450 aa).

The PCI domain occupies 255–424; sequence TELFFSPAYI…GTVIMNHPPQ (170 aa).

It belongs to the eIF-3 subunit E family. As to quaternary structure, component of the eukaryotic translation initiation factor 3 (eIF-3) complex.

The protein resides in the cytoplasm. In terms of biological role, component of the eukaryotic translation initiation factor 3 (eIF-3) complex, which is involved in protein synthesis of a specialized repertoire of mRNAs and, together with other initiation factors, stimulates binding of mRNA and methionyl-tRNAi to the 40S ribosome. The eIF-3 complex specifically targets and initiates translation of a subset of mRNAs involved in cell proliferation. The polypeptide is Eukaryotic translation initiation factor 3 subunit E (int6) (Aspergillus clavatus (strain ATCC 1007 / CBS 513.65 / DSM 816 / NCTC 3887 / NRRL 1 / QM 1276 / 107)).